A 649-amino-acid chain; its full sequence is Lipolysis-stimulated lipoprotein receptor (649 aa).

Residues 1-16 are compositionally biased toward gly residues; the sequence is MQQDGLGVGTRNGSGK. The disordered stretch occupies residues 1-21; the sequence is MQQDGLGVGTRNGSGKGRSVH. Topologically, residues 1 to 259 are extracellular; sequence MQQDGLGVGT…PGFQAGPIED (259 aa). Positions 86-234 constitute an Ig-like V-type domain; it reads PARAIQVTVS…DLQGNNEAYA (149 aa). Residues Cys-111 and Cys-218 are joined by a disulfide bond. The helical transmembrane segment at 260 to 280 threads the bilayer; the sequence is WLFVVVVCLAAFLIFLLLGIC. Over 281–649 the chain is Cytoplasmic; that stretch reads WCQCCPHTCC…LALSRESLVV (369 aa). A Phosphothreonine modification is found at Thr-336. 5 positions are modified to phosphoserine: Ser-365, Ser-371, Ser-389, Ser-432, and Ser-436. Residues 414–649 form a disordered region; it reads NFDPSRPGPP…LALSRESLVV (236 aa). The span at 426 to 444 shows a compositional bias: basic and acidic residues; that stretch reads RVERAMSEVTSLHEDDWRS. Thr-453 carries the phosphothreonine modification. 3 positions are modified to phosphoserine: Ser-464, Ser-467, and Ser-493. At Thr-501 the chain carries Phosphothreonine. The span at 502-518 shows a compositional bias: polar residues; that stretch reads PPSTAESGSRSPTSNGG. 2 positions are modified to phosphoserine: Ser-528 and Ser-530. Positions 529 to 565 are enriched in basic and acidic residues; sequence RSRDDLYDQDDSRDFPRSRDPHYDDFRSRERPPADPR. Tyr-535 is modified (phosphotyrosine). Residues Ser-540 and Ser-579 each carry the phosphoserine modification. Residues 589–609 are compositionally biased toward basic and acidic residues; it reads RLLEEAVRKKGSEERRRPHKE. The residue at position 631 (Ser-631) is a Phosphoserine. A Glycyl lysine isopeptide (Lys-Gly) (interchain with G-Cter in ubiquitin) cross-link involves residue Lys-638. Ser-643 and Ser-646 each carry phosphoserine.

It belongs to the immunoglobulin superfamily. LISCH7 family. Homotrimer or homotetramer. Assembles into cell-cell contacts. Interacts (via the cytoplasmic domain) with MARVELD2 (via C-terminal cytoplasmic domain); the interaction is required to recruit MARVELD2 to tricellular contacts. Interacts with OCLN. Post-translationally, phosphorylation at Ser-365 by MAPK8/JNK1 and MAPK9/JNK2 may be required for exclusive localization at tricellular tight junstions. Polyubiquitinated at Lys-638 via 'Lys-63'-linked ubiquitin chains; deubiquitinated by USP53.

The protein localises to the cell membrane. It is found in the cell junction. Its subcellular location is the tight junction. Probable role in the clearance of triglyceride-rich lipoprotein from blood. Binds chylomicrons, LDL and VLDL in presence of free fatty acids and allows their subsequent uptake in the cells. Maintains epithelial barrier function by recruiting MARVELD2/tricellulin to tricellular tight junctions. In Homo sapiens (Human), this protein is Lipolysis-stimulated lipoprotein receptor.